We begin with the raw amino-acid sequence, 400 residues long: ATP-dependent rRNA helicase RRP3 (400 aa).

Positions M1 to R29 match the Q motif motif. The 171-residue stretch at I32–I202 folds into the Helicase ATP-binding domain. Residue S45–T52 participates in ATP binding. A DEAD box motif is present at residues D150–D153. The region spanning A229–G373 is the Helicase C-terminal domain.

This sequence belongs to the DEAD box helicase family. DDX47/RRP3 subfamily. Interacts with the SSU processome.

The protein localises to the nucleus. It catalyses the reaction ATP + H2O = ADP + phosphate + H(+). ATP-dependent rRNA helicase required for pre-ribosomal RNA processing. Involved in the maturation of the 35S-pre-rRNA and to its cleavage to mature 18S rRNA. This is ATP-dependent rRNA helicase RRP3 from Encephalitozoon cuniculi (strain GB-M1) (Microsporidian parasite).